Consider the following 308-residue polypeptide: Phenylcoumaran benzylic ether reductase 1 (308 aa).

Residues 11 to 17 (GGTGYIG), Arg-36, and Arg-45 each bind NADP(+). The active-site Proton acceptor is Lys-133. An NADP(+)-binding site is contributed by Arg-137.

The protein belongs to the NmrA-type oxidoreductase family. Isoflavone reductase subfamily. In terms of tissue distribution, expressed in apical meristem and cotyledon veins of young seedlings. Expressed in vascular tissues of roots, leaves, stems and petals. Expressed in pollen grains. Expressed at low levels in cauline leaves and siliques.

It carries out the reaction (-)-dehydrodiconiferyl alcohol + NADPH + H(+) = (S)-isodihydrodehydrodiconiferyl alcohol + NADP(+). The catalysed reaction is (+)-dehydrodiconiferyl alcohol + NADPH + H(+) = (R)-isodihydrodehydrodiconiferyl alcohol + NADP(+). The enzyme catalyses (2R,3S)-dihydrodehydrodiconiferyl alcohol + NADPH + H(+) = (S)-tetrahydrodehydrodiconiferyl alcohol + NADP(+). It catalyses the reaction (2S,3R)-dihydrodehydrodiconiferyl alcohol + NADPH + H(+) = (R)-tetrahydrodehydrodiconiferyl alcohol + NADP(+). In terms of biological role, oxidoreductase involved in lignan biosynthesis. Catalyzes the NADPH-dependent reduction of phenylcoumaran benzylic ethers. Converts dehydrodiconiferyl alcohol (DDC) to isodihydrodehydrodiconiferyl alcohol (IDDDC), and dihydrodehydrodiconiferyl alcohol (DDDC) to tetrahydrodehydrodiconiferyl alcohol (TDDC). Plays an important role in the biosynthesis of secondary metabolites. In addition to the 8-5'-linked neolignan DDC, can reduce the 8-8'-linked lignans, pinoresinol, and lariciresinol, but with lower activities. The sequence is that of Phenylcoumaran benzylic ether reductase 1 from Arabidopsis thaliana (Mouse-ear cress).